Here is a 225-residue protein sequence, read N- to C-terminus: MWLLLSPTRLEAPFLEGEPFAFLAWRGLKGTGFVYLETGIGKVNAAMALAAYAARNPVEKALLFGLAGAYPGGPSLGEAVLVEEEVEADLGLKEGLAPLGFPALALGERRYFNRFPLDPGLTGELARGLGLKVAVGLTRDLVSETPEEALALARRWGASLENMEGAAFARACLALGVRGAELRALSNPAGVRDKAHWRTKEALSALARAVRRLLAEEGGARRPPG.

It belongs to the PNP/UDP phosphorylase family. Futalosine hydrolase subfamily. Homotetramer.

It catalyses the reaction futalosine + H2O = dehypoxanthine futalosine + hypoxanthine. It functions in the pathway quinol/quinone metabolism; menaquinone biosynthesis. With respect to regulation, no enhancing of inhibitory effects are observed with divalent metal ions. Slightly inhibited by hypoxanthine. Catalyzes the hydrolysis of futalosine (FL) to dehypoxanthine futalosine (DHFL) and hypoxanthine, a step in the biosynthesis of menaquinone (MK, vitamin K2). Is highly specific to futalosine since it does not accept aminodeoxyfutalosine (AFL), or any structurally related nucleotides and nucleosides as substrate. The polypeptide is Futalosine hydrolase (Thermus thermophilus (strain ATCC 27634 / DSM 579 / HB8)).